The sequence spans 328 residues: UPF0104 membrane protein AF_2231 (328 aa).

6 consecutive transmembrane segments (helical) span residues N31–L51, I116–S136, F139–Y159, L221–L241, A245–L265, and M277–W297.

Belongs to the UPF0104 family.

The protein resides in the cell membrane. This chain is UPF0104 membrane protein AF_2231, found in Archaeoglobus fulgidus (strain ATCC 49558 / DSM 4304 / JCM 9628 / NBRC 100126 / VC-16).